Reading from the N-terminus, the 298-residue chain is Ribosomal RNA small subunit methyltransferase H (298 aa).

Residues glycine 31 to histidine 33, aspartate 50, tyrosine 80, aspartate 95, and glutamine 102 contribute to the S-adenosyl-L-methionine site. Positions alanine 255–glutamate 298 are disordered.

It belongs to the methyltransferase superfamily. RsmH family.

The protein localises to the cytoplasm. It carries out the reaction cytidine(1402) in 16S rRNA + S-adenosyl-L-methionine = N(4)-methylcytidine(1402) in 16S rRNA + S-adenosyl-L-homocysteine + H(+). In terms of biological role, specifically methylates the N4 position of cytidine in position 1402 (C1402) of 16S rRNA. This is Ribosomal RNA small subunit methyltransferase H from Cytophaga hutchinsonii (strain ATCC 33406 / DSM 1761 / CIP 103989 / NBRC 15051 / NCIMB 9469 / D465).